A 166-amino-acid polypeptide reads, in one-letter code: Phospholipase A2 inhibitor clone 08 (166 aa).

The first 19 residues, 1–19 (MRLILLSSLLLLGIFLANG), serve as a signal peptide directing secretion. The 116-residue stretch at 46–161 (LKGAFLTVHR…CDDNLLVVCE (116 aa)) folds into the C-type lectin domain. 2 cysteine pairs are disulfide-bonded: C83-C160 and C138-C152. N122 carries N-linked (GlcNAc...) asparagine glycosylation.

Belongs to the alpha-type phospholipase A2 inhibitor family. As to quaternary structure, homotrimer; non-covalently linked. As to expression, expressed by the liver.

Its subcellular location is the secreted. This phospholipase A2 inhibitor binds directly phospholipase A2 in the presence or absence of calcium. The sequence is that of Phospholipase A2 inhibitor clone 08 from Bothrops moojeni (Lance-headed viper).